Reading from the N-terminus, the 552-residue chain is Undecaprenyl phosphate-alpha-4-amino-4-deoxy-L-arabinose arabinosyl transferase (552 aa).

The next 11 helical transmembrane spans lie at 4–24 (IAGWFTLAVLFVLYYIVPLPG), 81–101 (FAVRFGAVLATVLSALLVFWL), 113–133 (VVAVLIYLTSFLVYGVGSYAV), 176–196 (FMTKGFLALAIPVIAVLPWVI), 207–227 (FGPLAVLSAILISLPWVLAIA), 255–275 (APFWYYLPILLIGLLPWLGLL), 289–309 (QGGDFYLLGWAVMPFLLFSIA), 313–333 (LPTYILPCFAPLAILMAGYVQ), 351–371 (LLVGLGGMAAILLVLAPWGIT), 384–404 (VILGTIAFGVWALFGALSLYH), and 411–431 (WSAACLLGVALLIGTALPQQV).

It belongs to the glycosyltransferase 83 family.

It localises to the cell inner membrane. It catalyses the reaction 4-amino-4-deoxy-alpha-L-arabinopyranosyl di-trans,octa-cis-undecaprenyl phosphate + lipid IVA = lipid IIA + di-trans,octa-cis-undecaprenyl phosphate.. The protein operates within lipopolysaccharide metabolism; 4-amino-4-deoxy-beta-L-arabinose-lipid A biosynthesis. In terms of biological role, catalyzes the transfer of the L-Ara4N moiety of the glycolipid undecaprenyl phosphate-alpha-L-Ara4N to lipid A. The modified arabinose is attached to lipid A and is required for resistance to polymyxin and cationic antimicrobial peptides. The polypeptide is Undecaprenyl phosphate-alpha-4-amino-4-deoxy-L-arabinose arabinosyl transferase (Edwardsiella ictaluri (strain 93-146)).